A 163-amino-acid chain; its full sequence is ADP-ribosylation factor-like protein 2-binding protein (163 aa).

It belongs to the ARL2BP family. As to quaternary structure, interacts with GTP bound ARL2 and ARL3; the complex ARL2-ARL2BP as well as ARL2BP alone, binds to SLC25A4/ANT1. Interaction with ARL2 may be required for cilia basal body localization. Interacts with STAT3; interaction is enhanced with ARL2. Found in a complex with ARL2BP, ARL2 and SLC25A6. Found in a complex with ARL2, ARL2BP and SLC25A4. Interacts with STAT2, STAT3 and STAT4.

It is found in the cytoplasm. It localises to the mitochondrion intermembrane space. Its subcellular location is the cytoskeleton. The protein localises to the microtubule organizing center. The protein resides in the centrosome. It is found in the nucleus. It localises to the spindle. Its subcellular location is the cilium basal body. Its function is as follows. Together with ARL2, plays a role in the nuclear translocation, retention and transcriptional activity of STAT3. May play a role as an effector of ARL2. The sequence is that of ADP-ribosylation factor-like protein 2-binding protein (ARL2BP) from Macaca fascicularis (Crab-eating macaque).